Reading from the N-terminus, the 868-residue chain is LPS-assembly protein LptD (868 aa).

A signal peptide spans 1 to 24 (MLKGIHKYLLMCFGTVLFTVQANA).

It belongs to the LptD family. Component of the lipopolysaccharide transport and assembly complex. Interacts with LptE and LptA.

The protein localises to the cell outer membrane. In terms of biological role, together with LptE, is involved in the assembly of lipopolysaccharide (LPS) at the surface of the outer membrane. The polypeptide is LPS-assembly protein LptD (Francisella tularensis subsp. holarctica (strain LVS)).